Reading from the N-terminus, the 113-residue chain is Prefoldin subunit beta (113 aa).

Belongs to the prefoldin subunit beta family. In terms of assembly, heterohexamer of two alpha and four beta subunits.

The protein localises to the cytoplasm. Functionally, molecular chaperone capable of stabilizing a range of proteins. Seems to fulfill an ATP-independent, HSP70-like function in archaeal de novo protein folding. In Methanococcus maripaludis (strain C7 / ATCC BAA-1331), this protein is Prefoldin subunit beta.